A 514-amino-acid polypeptide reads, in one-letter code: Nucleus accumbens-associated protein 1 (514 aa).

Positions 30–94 (CDVSVVVKGH…CYTGRLSMNM (65 aa)) constitute a BTB domain. Residue lysine 167 forms a Glycyl lysine isopeptide (Lys-Gly) (interchain with G-Cter in SUMO1); alternate linkage. Lysine 167 is covalently cross-linked (Glycyl lysine isopeptide (Lys-Gly) (interchain with G-Cter in SUMO2); alternate). Residue lysine 182 forms a Glycyl lysine isopeptide (Lys-Gly) (interchain with G-Cter in SUMO2) linkage. Disordered stretches follow at residues 183 to 218 (RLWD…NRMP) and 241 to 279 (GPSM…EEGT). Serine 187 carries the phosphoserine modification. Polar residues predominate over residues 242-251 (PSMSERTSPG). Residue serine 245 is modified to Phosphoserine; by PKC. Over residues 252–264 (TSSAYTSDSPSSY) the composition is skewed to low complexity. Residues 267 to 279 (EEDEEEDAGEEGT) are compositionally biased toward acidic residues. Residues lysine 304, lysine 438, lysine 466, and lysine 485 each participate in a glycyl lysine isopeptide (Lys-Gly) (interchain with G-Cter in SUMO2) cross-link. The region spanning 360–457 (GTNVYITRAQ…DMCTNARRVV (98 aa)) is the BEN domain. A phosphoserine mark is found at serine 492 and serine 496.

As to quaternary structure, homooligomer; mediated by the BTB domain. Both isoforms interact with HDAC3 and HDAC4. Interacts (via BTB domain) with CUL3, PSMD7 and RCOR1. Post-translationally, phosphorylated by protein kinase C (PKC). As to expression, highly expressed in the hippocampus, brain cortex, cerebellum and brainstem. Expressed in the nucleus accumbens, olfactory tubercle, the striatum, frontal and parietal cortex and ventral pallidum. Weakly expressed in the heart, liver, kidney, spleen, testis, and skeletal muscle. Isoform 2 is expressed in the brain and liver, less abundantly expressed in the brain than isoform 1.

Its subcellular location is the nucleus. The protein localises to the cytoplasm. In terms of biological role, functions as a transcriptional repressor. Isoform 1 is a stronger transcriptional repressor than isoform 2. Seems to function as a transcriptional corepressor in neuronal cells through recruitment of HDAC3 and HDAC4. Contributes to tumor progression, and tumor cell proliferation and survival. This may be mediated at least in part through repressing transcriptional activity of GADD45GIP1. Required for recruiting the proteasome from the nucleus to the cytoplasm and dendritic spines. This Rattus norvegicus (Rat) protein is Nucleus accumbens-associated protein 1 (Nacc1).